The sequence spans 269 residues: Diaminopimelate epimerase (269 aa).

Substrate is bound by residues N13, Q47, and N65. C74 functions as the Proton donor in the catalytic mechanism. Residues 75–76, N149, N182, and 200–201 each bind substrate; these read GN and ER. The active-site Proton acceptor is C209. 210 to 211 lines the substrate pocket; sequence GT.

The protein belongs to the diaminopimelate epimerase family. In terms of assembly, homodimer.

The protein localises to the cytoplasm. The catalysed reaction is (2S,6S)-2,6-diaminopimelate = meso-2,6-diaminopimelate. The protein operates within amino-acid biosynthesis; L-lysine biosynthesis via DAP pathway; DL-2,6-diaminopimelate from LL-2,6-diaminopimelate: step 1/1. Functionally, catalyzes the stereoinversion of LL-2,6-diaminopimelate (L,L-DAP) to meso-diaminopimelate (meso-DAP), a precursor of L-lysine and an essential component of the bacterial peptidoglycan. The chain is Diaminopimelate epimerase from Erythrobacter litoralis (strain HTCC2594).